A 929-amino-acid polypeptide reads, in one-letter code: ATP-dependent RNA helicase DDX42 (929 aa).

Lys-5 carries the N6-acetyllysine modification. The residue at position 12 (Arg-12) is an Omega-N-methylarginine. 2 disordered regions span residues 25-119 and 182-203; these read KKEE…LEAF and EYDS…LPPI. Residues 35 to 52 show a composition bias toward low complexity; the sequence is SHSAFGAASSSSGFGKSA. Ser-58 is subject to Phosphoserine. Over residues 70 to 84 the composition is skewed to acidic residues; the sequence is DEENAYFEDEEEDSS. Residues Ser-96, Ser-104, Ser-109, and Ser-111 each carry the phosphoserine modification. Residues 116–157 are a coiled coil; the sequence is LEAFMAEVEDQAARDMKRLEEKDKERKNVKGIRDDIEEEDDQ. Ser-185 is subject to Phosphoserine. Residues 253–281 carry the Q motif motif; the sequence is SSFAHFGFDEQLMHQIRKSEYTQPTPIQC. In terms of domain architecture, Helicase ATP-binding spans 284–459; sequence VPVALSGRDM…RDILIDPIRV (176 aa). ATP is bound at residue 297–304; the sequence is AKTGSGKT. The short motif at 407 to 410 is the DEAD box element; it reads DEAD. One can recognise a Helicase C-terminal domain in the interval 487–632; the sequence is WLTRRLVEFT…HVSKELLDLA (146 aa). Disordered regions lie at residues 662–682 and 723–929; these read ERPG…VMSN and GTSS…RWDS. Residues 723–737 are compositionally biased toward low complexity; it reads GTSSAGASGWTSAGS. Polar residues-rich tracts occupy residues 738–777 and 787–798; these read LNSV…SSAP and GVNNTASGNNSR. The necessary for interaction with TP53BP2 stretch occupies residues 739–828; the sequence is NSVPTNSAQQ…RHSHGDGGNR (90 aa). Over residues 821–911 the composition is skewed to basic and acidic residues; it reads SHGDGGNRHG…KVDSKTDKTP (91 aa). A Glycyl lysine isopeptide (Lys-Gly) (interchain with G-Cter in SUMO2) cross-link involves residue Lys-894.

The protein belongs to the DEAD box helicase family. DDX42 subfamily. In terms of assembly, transient component of the SF3B subcomplex of the 17S U2 SnRNP complex. Interacts (via the C-terminus) with TP53BP2; the interaction is not inhibitied by TP53BP2 ubiquitination and is independent of p53/TP53.

The protein localises to the cytoplasm. It is found in the nucleus. It catalyses the reaction ATP + H2O = ADP + phosphate + H(+). Functionally, ATP-dependent RNA helicase that binds to partially double-stranded RNAs (dsRNAs) in order to unwind RNA secondary structures. Unwinding is promoted in the presence of single-strand binding proteins. Also mediates RNA duplex formation thereby displacing the single-strand RNA binding protein. ATP and ADP modulate its activity: ATP binding and hydrolysis by DDX42 triggers RNA strand separation, whereas the ADP-bound form of the protein triggers annealing of complementary RNA strands. Required for assembly of the 17S U2 SnRNP complex of the spliceosome, a large ribonucleoprotein complex that removes introns from transcribed pre-mRNAs: DDX42 associates transiently with the SF3B subcomplex of the 17S U2 SnRNP complex and is released after fulfilling its role in the assembly of 17S U2 SnRNP. Involved in the survival of cells by interacting with TP53BP2 and thereby counteracting the apoptosis-stimulating activity of TP53BP2. Relocalizes TP53BP2 to the cytoplasm. This is ATP-dependent RNA helicase DDX42 (Ddx42) from Mus musculus (Mouse).